Here is a 504-residue protein sequence, read N- to C-terminus: Arabinose import ATP-binding protein AraG (504 aa).

ABC transporter domains follow at residues 8 to 243 and 256 to 499; these read LSFR…MVGR and YGEE…MPKV. 40-47 provides a ligand contact to ATP; it reads GENGAGKS.

The protein belongs to the ABC transporter superfamily. Arabinose importer (TC 3.A.1.2.2) family. The complex is composed of two ATP-binding proteins (AraG), two transmembrane proteins (AraH) and a solute-binding protein (AraF).

It is found in the cell inner membrane. The catalysed reaction is L-arabinose(out) + ATP + H2O = L-arabinose(in) + ADP + phosphate + H(+). Part of the ABC transporter complex AraFGH involved in arabinose import. Responsible for energy coupling to the transport system. The chain is Arabinose import ATP-binding protein AraG from Shigella boydii serotype 4 (strain Sb227).